Consider the following 807-residue polypeptide: MSVIEEKCNESSYSADSIKVLKGLEAVRKRPGMYIGDVGDGSGLHHMIYEVVDNSIDEALAGYCDLVQVTLNKNGSVTVSDNGRGIPVEIHEEEGISAAEVIMTQLHAGGKFDQQSYKISGGLHGVGVSVVNALSEWLELRIWRNNKEYFIRFNNGITEAPLSIVKENIDKKGTEVTFFPSVGTFTNIEFDFVTIEHRLRELAFLNSGVKILLVDNRFEEVKKVEFYYTGGIEAYVQYIDRAKHAIHPCIVVNTVHVESGISLELALHWNDSYHENILCFTNNIRQRDGGTHLSAFKSAITRVITSYLDTTGLNKKTKHDFSGEDTREGICCVLSVKVPDPKFSSQTKDKLVSSEVRPVVENAVYTKVLEWFEEHPTEAKAIIAKIMEAANAREAARKARELTRRKSALEVSNLPGKLADCHAKDPAISELFIVEGDSAGGTAKQGRDSKIQAILPLRGKILNVERARFDKMLGSDQIGTLITALGISVEREFSLEKLRYHKVIIMTDADVDGSHIRALLLTFFYRHMPELINKGYLYIAQPPLYKVKSGASELYLKNEKALQNYLIKSTINDTYLILDGQEQLVGENLEDLINKVVKFNNLLDHVSKKFNRSITEILAINDLFNKKIFEPESSARLQKALDILNNLEESPDKTNLQVLKHENKIEFFHFSRGLKETKILLKEQLELFEFVEISQFALSIFDIFSKRLKLIVKSKAFDILTPSQLLNTIIECGKKGITIQRFKGLGEMNSDQLWETTLDPTKRTLLQVRVAEVDEAEGIFSTLMGDVVEPRRLFIQANALNVMNLDV.

A Toprim domain is found at 429–543 (SELFIVEGDS…KGYLYIAQPP (115 aa)). 3 residues coordinate Mg(2+): Glu-435, Asp-508, and Asp-510.

The protein belongs to the type II topoisomerase GyrB family. In terms of assembly, heterotetramer, composed of two GyrA and two GyrB chains. In the heterotetramer, GyrA contains the active site tyrosine that forms a transient covalent intermediate with DNA, while GyrB binds cofactors and catalyzes ATP hydrolysis. Mg(2+) serves as cofactor. The cofactor is Mn(2+). Ca(2+) is required as a cofactor.

It is found in the cytoplasm. It catalyses the reaction ATP-dependent breakage, passage and rejoining of double-stranded DNA.. A type II topoisomerase that negatively supercoils closed circular double-stranded (ds) DNA in an ATP-dependent manner to modulate DNA topology and maintain chromosomes in an underwound state. Negative supercoiling favors strand separation, and DNA replication, transcription, recombination and repair, all of which involve strand separation. Also able to catalyze the interconversion of other topological isomers of dsDNA rings, including catenanes and knotted rings. Type II topoisomerases break and join 2 DNA strands simultaneously in an ATP-dependent manner. This chain is DNA gyrase subunit B, found in Rickettsia prowazekii (strain Madrid E).